The sequence spans 175 residues: Peptide deformylase (175 aa).

Fe cation contacts are provided by cysteine 99 and histidine 141. The active site involves glutamate 142. Histidine 145 is a binding site for Fe cation.

This sequence belongs to the polypeptide deformylase family. Fe(2+) serves as cofactor.

It catalyses the reaction N-terminal N-formyl-L-methionyl-[peptide] + H2O = N-terminal L-methionyl-[peptide] + formate. Removes the formyl group from the N-terminal Met of newly synthesized proteins. Requires at least a dipeptide for an efficient rate of reaction. N-terminal L-methionine is a prerequisite for activity but the enzyme has broad specificity at other positions. In Rickettsia akari (strain Hartford), this protein is Peptide deformylase.